The following is a 354-amino-acid chain: MSGFVVSKPEQSHHRLFDFAKTAIINIFAHPYATVCELYCGGAPETDKWEAAPIGHYIGIDTSSGISSVREAWESQRKNYDVEFFEADPSKDDFEIQLQKKLEQADLVSCWRHLQLCFETEESARRLLTNVACLLKPGGYFFGITPDSSTIWAKYQKNVEAYHNRSGAKPNVFPNYIRSESYMITFELEEEKFPLFGKRYQLKFSGDNASEDHCLVHFPSLIRLAREAGLEFVEIQSLTDFYDDNRAQFASLLMNAGPNFVDPRGKLLPRAFDLLGLYATFIFQKPDPDIEPPLTTPIPFESSNNHDERELPVITVITDASAPAEDPSQGLGKIVEQKGILGPGPADLRFSEAI.

The mRNA cap 0 methyltransferase domain maps to 8-286; sequence KPEQSHHRLF…LYATFIFQKP (279 aa). S-adenosyl-L-methionine is bound by residues K21, D61, and 88–89; that span reads DP.

The protein belongs to the class I-like SAM-binding methyltransferase superfamily. mRNA cap 0 methyltransferase family.

The protein localises to the nucleus. It carries out the reaction a 5'-end (5'-triphosphoguanosine)-ribonucleoside in mRNA + S-adenosyl-L-methionine = a 5'-end (N(7)-methyl 5'-triphosphoguanosine)-ribonucleoside in mRNA + S-adenosyl-L-homocysteine. In terms of biological role, mRNA capping methyltransferase that methylates the N7 position of the added guanosine to the 5'-cap structure of mRNAs. Binds RNA containing 5'-terminal GpppC. This is mRNA cap guanine-N(7) methyltransferase 2 from Arabidopsis thaliana (Mouse-ear cress).